The chain runs to 316 residues: Protoheme IX farnesyltransferase (316 aa).

9 helical membrane passes run 32–52 (VMSL…GHIH), 53–73 (PVLG…SGAL), 93–113 (IPAG…LSGF), 116–136 (VILG…TIFF), 152–172 (NIVI…ACVT), 180–200 (TVLF…LALF), 221–241 (VTKH…ILPS), 252–271 (LVAA…VWRM), and 289–309 (IFYL…SIFV).

It belongs to the UbiA prenyltransferase family. Protoheme IX farnesyltransferase subfamily.

Its subcellular location is the cell inner membrane. It carries out the reaction heme b + (2E,6E)-farnesyl diphosphate + H2O = Fe(II)-heme o + diphosphate. The protein operates within porphyrin-containing compound metabolism; heme O biosynthesis; heme O from protoheme: step 1/1. Functionally, converts heme B (protoheme IX) to heme O by substitution of the vinyl group on carbon 2 of heme B porphyrin ring with a hydroxyethyl farnesyl side group. This Rhizobium leguminosarum bv. trifolii (strain WSM2304) protein is Protoheme IX farnesyltransferase.